Consider the following 1100-residue polypeptide: Guanylate cyclase 2G (1100 aa).

Residues 1 to 43 (MASRTRSESPLEPRLYAGAGSRADHPSLVLMLSVVMLVTCLEA) form the signal peptide. The Extracellular portion of the chain corresponds to 44–481 (AKLTVGFHAP…VAGMTVTVTA (438 aa)). Residues Asn55, Asn85, Asn94, Asn217, Asn225, Asn238, Asn418, Asn440, and Asn443 are each glycosylated (N-linked (GlcNAc...) asparagine). A helical transmembrane segment spans residues 482–502 (VIPTVTFLVLASAAAITGLML). Over 503 to 1100 (WRLRGKVQSH…EEEAKVSEIL (598 aa)) the chain is Cytoplasmic. The Protein kinase domain maps to 546-837 (SDTSTVKASA…EASPRGHVSI (292 aa)). Residues 901 to 1031 (TIFFSDIVGF…DTVNMASRME (131 aa)) enclose the Guanylate cyclase domain.

The protein belongs to the adenylyl cyclase class-4/guanylyl cyclase family. As to quaternary structure, homooligomer. In vitro interacts with NPR1/GC-A. In terms of processing, N-glycosylated. In terms of tissue distribution, highly expressed in testis.

The protein resides in the cell membrane. It catalyses the reaction GTP = 3',5'-cyclic GMP + diphosphate. In Mus musculus (Mouse), this protein is Guanylate cyclase 2G (Gucy2g).